The sequence spans 821 residues: Leucine--tRNA ligase (821 aa).

The 'HIGH' region signature appears at 42 to 52 (PYPSGKLHMGH). The short motif at 583–587 (KMSKS) is the 'KMSKS' region element. Lysine 586 contributes to the ATP binding site.

Belongs to the class-I aminoacyl-tRNA synthetase family.

Its subcellular location is the cytoplasm. The enzyme catalyses tRNA(Leu) + L-leucine + ATP = L-leucyl-tRNA(Leu) + AMP + diphosphate. The chain is Leucine--tRNA ligase from Carboxydothermus hydrogenoformans (strain ATCC BAA-161 / DSM 6008 / Z-2901).